The following is a 189-amino-acid chain: Probable nicotinate-nucleotide adenylyltransferase (189 aa).

Belongs to the NadD family.

The catalysed reaction is nicotinate beta-D-ribonucleotide + ATP + H(+) = deamido-NAD(+) + diphosphate. It functions in the pathway cofactor biosynthesis; NAD(+) biosynthesis; deamido-NAD(+) from nicotinate D-ribonucleotide: step 1/1. Functionally, catalyzes the reversible adenylation of nicotinate mononucleotide (NaMN) to nicotinic acid adenine dinucleotide (NaAD). The chain is Probable nicotinate-nucleotide adenylyltransferase from Staphylococcus aureus (strain bovine RF122 / ET3-1).